The chain runs to 177 residues: ATP-dependent protease subunit HslV (177 aa).

Thr-6 is an active-site residue. Na(+)-binding residues include Ser-161, Cys-164, and Thr-167.

It belongs to the peptidase T1B family. HslV subfamily. In terms of assembly, a double ring-shaped homohexamer of HslV is capped on each side by a ring-shaped HslU homohexamer. The assembly of the HslU/HslV complex is dependent on binding of ATP.

The protein resides in the cytoplasm. The enzyme catalyses ATP-dependent cleavage of peptide bonds with broad specificity.. With respect to regulation, allosterically activated by HslU binding. Its function is as follows. Protease subunit of a proteasome-like degradation complex believed to be a general protein degrading machinery. In Thermodesulfovibrio yellowstonii (strain ATCC 51303 / DSM 11347 / YP87), this protein is ATP-dependent protease subunit HslV.